We begin with the raw amino-acid sequence, 113 residues long: MNKLRKLKRDTDHRQALMRNLATSLFKHGRIMTTEAKAKDLRRIAEKLITIAKKGDLASYRRVLGYLYEEDVAYDLFQKIAPRYQGRNGGYTRIIKVGPRKGDGAMMVYIELV.

The protein belongs to the bacterial ribosomal protein bL17 family. As to quaternary structure, part of the 50S ribosomal subunit. Contacts protein L32.

The sequence is that of Large ribosomal subunit protein bL17 from Caldicellulosiruptor bescii (strain ATCC BAA-1888 / DSM 6725 / KCTC 15123 / Z-1320) (Anaerocellum thermophilum).